A 367-amino-acid chain; its full sequence is Peptide chain release factor 2 (367 aa).

Glutamine 254 is modified (N5-methylglutamine).

This sequence belongs to the prokaryotic/mitochondrial release factor family. Post-translationally, methylated by PrmC. Methylation increases the termination efficiency of RF2.

The protein resides in the cytoplasm. In terms of biological role, peptide chain release factor 2 directs the termination of translation in response to the peptide chain termination codons UGA and UAA. This is Peptide chain release factor 2 from Burkholderia mallei (strain ATCC 23344).